A 300-amino-acid polypeptide reads, in one-letter code: MDVVLYIAAAAILLVLIVFSVKIRGRTQDADVEDHQNVTARVSARPQAAPERAAGMPRRRRGLHSRVNAQRAQRASDNEDSPVEADEDEEGRNASEERPQAAGKVGAKKQRKLEEKQARKAQREAEQEEREERKRLQELRDQERQKEEEKERQQEQKQEEELQRVKEEQERREEEEYQRLKESFIIEDQGEAEELTEHESQSLLQEFIQYVQKSKVVLLEDLASQFGLRTQDAIARLQDLIADGSLTGVIDDRGKFIFITPEELNAVAQFIKQRGRVSISELAQASNTLINLTPDIHSSA.

Over 1–2 (MD) the chain is Lumenal. The helical transmembrane segment at 3-23 (VVLYIAAAAILLVLIVFSVKI) threads the bilayer. Residues 24 to 300 (RGRTQDADVE…NLTPDIHSSA (277 aa)) lie on the Cytoplasmic side of the membrane. Residues 28–173 (QDADVEDHQN…RVKEEQERRE (146 aa)) are disordered. The span at 78–90 (NEDSPVEADEDEE) shows a compositional bias: acidic residues. The span at 112–173 (KLEEKQARKA…RVKEEQERRE (62 aa)) shows a compositional bias: basic and acidic residues. The UFM1-interacting motif (UFIM) signature appears at 183-197 (SFIIEDQGEAEELTE). Positions 217–261 (VLLEDLASQFGLRTQDAIARLQDLIADGSLTGVIDDRGKFIFITP) constitute a PCI domain.

Belongs to the DDRGK1 family. Component of the UFM1 ribosome E3 ligase (UREL) complex, composed of ufl1, ddrgk1 and cdk5rap3.

It localises to the endoplasmic reticulum membrane. In terms of biological role, component of the UFM1 ribosome E3 ligase (UREL) complex, a multiprotein complex that catalyzes ufmylation of endoplasmic reticulum-docked proteins. The UREL complex plays a key role in ribosome recycling by mediating mono-ufmylation of the RPL26/uL24 subunit of the 60S ribosome following ribosome dissociation: ufmylation weakens the junction between post-termination 60S subunits and SEC61 translocons, promoting release and recycling of the large ribosomal subunit from the endoplasmic reticulum membrane. Ufmylation of RPL26/uL24 and subsequent 60S ribosome recycling either take place after normal termination of translation or after ribosome stalling during cotranslational translocation at the endoplasmic reticulum. Within the UREL complex, DDRGK1 tethers the complex to the endoplasmic reticulum membrane to restrict its activity to endoplasmic reticulum-docked ribosomes and acts as an ufmylation 'reader': following RPL26/uL24 ufmylation, DDRGK1 specifically binds to ufmylated RPL26/uL24 via its UFIM motif, resulting in stable association between the 60S ribosome and the UREL complex, followed by dissociation of the 60S ribosome subunit from the endoplasmic reticulum membrane. The UREL complex is also involved in reticulophagy in response to endoplasmic reticulum stress by promoting ufmylation of proteins such as CYB5R3 and RPN1, thereby promoting lysosomal degradation of ufmylated proteins. Plays a role in cartilage development through sox9, inhibiting the ubiquitin-mediated proteasomal degradation of this transcriptional regulator. Required for stabilization and ufmylation of ATG9A. This Danio rerio (Zebrafish) protein is DDRGK domain-containing protein 1.